We begin with the raw amino-acid sequence, 319 residues long: Phospho-N-acetylmuramoyl-pentapeptide-transferase (319 aa).

Transmembrane regions (helical) follow at residues 5 to 25, 51 to 71, 79 to 99, 116 to 136, 149 to 169, 172 to 192, 197 to 217, 224 to 244, 252 to 272, and 299 to 319; these read LIPFISSFALTVIFLPLFIGF, TMGGVVFMLASVISTLWVLIW, TWILIIAFLGYGIIGFLDDGI, LGQIIIAALIIALAFSDHFAF, SFLFSLFVLFWLVGFSNAVNL, GLDGLATGLSIIAYATYAWIA, NWVIVAFTLSVIGGLVGFFIF, IFMGDAGSLALGGGLATVSIF, LLIGIVFVLETLSVILQVISF, and VDIVFWIVGLIGSIIYLIIWG.

Belongs to the glycosyltransferase 4 family. MraY subfamily. Requires Mg(2+) as cofactor.

Its subcellular location is the cell membrane. It carries out the reaction UDP-N-acetyl-alpha-D-muramoyl-L-alanyl-gamma-D-glutamyl-L-lysyl-D-alanyl-D-alanine + di-trans,octa-cis-undecaprenyl phosphate = Mur2Ac(oyl-L-Ala-gamma-D-Glu-L-Lys-D-Ala-D-Ala)-di-trans,octa-cis-undecaprenyl diphosphate + UMP. The protein operates within cell wall biogenesis; peptidoglycan biosynthesis. Catalyzes the initial step of the lipid cycle reactions in the biosynthesis of the cell wall peptidoglycan: transfers peptidoglycan precursor phospho-MurNAc-pentapeptide from UDP-MurNAc-pentapeptide onto the lipid carrier undecaprenyl phosphate, yielding undecaprenyl-pyrophosphoryl-MurNAc-pentapeptide, known as lipid I. This chain is Phospho-N-acetylmuramoyl-pentapeptide-transferase, found in Lactobacillus gasseri (strain ATCC 33323 / DSM 20243 / BCRC 14619 / CIP 102991 / JCM 1131 / KCTC 3163 / NCIMB 11718 / NCTC 13722 / AM63).